A 245-amino-acid polypeptide reads, in one-letter code: Probable transcriptional regulatory protein CPR_1922 (245 aa).

This sequence belongs to the TACO1 family.

It is found in the cytoplasm. The sequence is that of Probable transcriptional regulatory protein CPR_1922 from Clostridium perfringens (strain SM101 / Type A).